We begin with the raw amino-acid sequence, 324 residues long: Succinylglutamate desuccinylase (324 aa).

Zn(2+) contacts are provided by His53, Glu56, and His148. Glu211 is a catalytic residue.

It belongs to the AspA/AstE family. Succinylglutamate desuccinylase subfamily. Requires Zn(2+) as cofactor.

The catalysed reaction is N-succinyl-L-glutamate + H2O = L-glutamate + succinate. Its pathway is amino-acid degradation; L-arginine degradation via AST pathway; L-glutamate and succinate from L-arginine: step 5/5. Functionally, transforms N(2)-succinylglutamate into succinate and glutamate. This is Succinylglutamate desuccinylase from Acinetobacter baumannii (strain SDF).